A 351-amino-acid polypeptide reads, in one-letter code: Methylthioribose-1-phosphate isomerase (351 aa).

Asp244 (proton donor) is an active-site residue.

It belongs to the eIF-2B alpha/beta/delta subunits family. MtnA subfamily.

Its subcellular location is the cytoplasm. It localises to the nucleus. The enzyme catalyses 5-(methylsulfanyl)-alpha-D-ribose 1-phosphate = 5-(methylsulfanyl)-D-ribulose 1-phosphate. It participates in amino-acid biosynthesis; L-methionine biosynthesis via salvage pathway; L-methionine from S-methyl-5-thio-alpha-D-ribose 1-phosphate: step 1/6. Functionally, catalyzes the interconversion of methylthioribose-1-phosphate (MTR-1-P) into methylthioribulose-1-phosphate (MTRu-1-P). The protein is Methylthioribose-1-phosphate isomerase of Anopheles gambiae (African malaria mosquito).